A 255-amino-acid polypeptide reads, in one-letter code: Ornithine decarboxylase antizyme (255 aa).

This sequence belongs to the ODC antizyme family. As to quaternary structure, interacts with ODC and thereby sterically blocks ODC homodimerization.

Its function is as follows. Ornithine decarboxylase (ODC) antizyme protein that negatively regulates ODC activity and intracellular polyamine biosynthesis in response to increased intracellular polyamine levels. Binds to ODC monomers, inhibiting the assembly of the functional ODC homodimer, and targets the monomers for ubiquitin-independent proteolytic destruction by the 26S proteasome. In Candida glabrata (strain ATCC 2001 / BCRC 20586 / JCM 3761 / NBRC 0622 / NRRL Y-65 / CBS 138) (Yeast), this protein is Ornithine decarboxylase antizyme (OAZ1).